A 432-amino-acid polypeptide reads, in one-letter code: Repulsive guidance molecule A (432 aa).

The first 29 residues, methionine 1–proline 29, serve as a signal peptide directing secretion. A propeptide spans cysteine 30 to aspartate 149 (removed in mature form). N-linked (GlcNAc...) asparagine glycosylation occurs at asparagine 96. Residues lysine 99 to serine 122 form a disordered region. 2 disulfide bridges follow: cysteine 126/cysteine 207 and cysteine 144/cysteine 296. Residue asparagine 140 is glycosylated (N-linked (GlcNAc...) asparagine). Asparagine 404 carries GPI-anchor amidated asparagine lipidation. A propeptide spans alanine 405–leucine 432 (removed in mature form).

The protein belongs to the repulsive guidance molecule (RGM) family. In terms of processing, autocatalytically cleaved at low pH; the two chains remain linked via two disulfide bonds.

The protein resides in the cell membrane. Acts as an axon-specific repulsive guidance molecule in the retinotectal system. Repulsive for a subset of axons of the temporal half of the retina. Provides thus positional information for the temporal axons invading the optic tectum in the stratum opticum. The protein is Repulsive guidance molecule A (RGMA) of Gallus gallus (Chicken).